We begin with the raw amino-acid sequence, 428 residues long: Adenylosuccinate synthetase (428 aa).

GTP contacts are provided by residues 12–18 and 40–42; these read GDEGKGK and GHT. Residue aspartate 13 is the Proton acceptor of the active site. Positions 13 and 40 each coordinate Mg(2+). Residues 13–16, 38–41, threonine 128, arginine 142, glutamine 223, threonine 238, and arginine 302 contribute to the IMP site; these read DEGK and NAGH. Histidine 41 (proton donor) is an active-site residue. 298–304 provides a ligand contact to substrate; it reads TTTGRPR. GTP is bound by residues arginine 304, 330-332, and 412-414; these read KLD and GVG.

It belongs to the adenylosuccinate synthetase family. Homodimer. Mg(2+) serves as cofactor.

It localises to the cytoplasm. The catalysed reaction is IMP + L-aspartate + GTP = N(6)-(1,2-dicarboxyethyl)-AMP + GDP + phosphate + 2 H(+). It participates in purine metabolism; AMP biosynthesis via de novo pathway; AMP from IMP: step 1/2. Plays an important role in the de novo pathway of purine nucleotide biosynthesis. Catalyzes the first committed step in the biosynthesis of AMP from IMP. This is Adenylosuccinate synthetase from Kineococcus radiotolerans (strain ATCC BAA-149 / DSM 14245 / SRS30216).